The sequence spans 629 residues: tRNA uridine 5-carboxymethylaminomethyl modification enzyme MnmG (629 aa).

13 to 18 (GGGHAG) is a binding site for FAD. 273–287 (GPRYCPSIEDKIHRF) provides a ligand contact to NAD(+).

This sequence belongs to the MnmG family. Homodimer. Heterotetramer of two MnmE and two MnmG subunits. It depends on FAD as a cofactor.

It is found in the cytoplasm. NAD-binding protein involved in the addition of a carboxymethylaminomethyl (cmnm) group at the wobble position (U34) of certain tRNAs, forming tRNA-cmnm(5)s(2)U34. The chain is tRNA uridine 5-carboxymethylaminomethyl modification enzyme MnmG from Shewanella denitrificans (strain OS217 / ATCC BAA-1090 / DSM 15013).